We begin with the raw amino-acid sequence, 316 residues long: Delta(1)-pyrroline-2-carboxylate reductase (316 aa).

The protein belongs to the ornithine cyclodeaminase/mu-crystallin family.

It carries out the reaction L-proline + NAD(+) = 1-pyrroline-2-carboxylate + NADH + H(+). It catalyses the reaction L-proline + NADP(+) = 1-pyrroline-2-carboxylate + NADPH + H(+). Its function is as follows. Catalyzes the reduction of Delta(1)-pyrroline-2-carboxylate (Pyr2C) to L-proline, using preferentially NADPH over NADH as the electron donor. Is likely involved in a degradation pathway that converts trans-3-hydroxy-L-proline (t3LHyp) to L-proline, which would allow P.denitrificans to grow on t3LHyp as a sole carbon source. This Paracoccus denitrificans (strain Pd 1222) protein is Delta(1)-pyrroline-2-carboxylate reductase.